A 450-amino-acid chain; its full sequence is Chromosomal replication initiator protein DnaA 2 (450 aa).

The segment at 1-87 (MLTCNECTTW…LEFVVAEHKK (87 aa)) is domain I, interacts with DnaA modulators. The domain II stretch occupies residues 87–114 (KPSAPVASQKESNEGISEVFEETKDFEL). The tract at residues 115-330 (KLNLSYRFDN…GAINKLTAYC (216 aa)) is domain III, AAA+ region. The ATP site is built by glycine 159, glycine 161, lysine 162, and threonine 163. The interval 331-450 (RLFGKSLTET…VNLCKNHIVG (120 aa)) is domain IV, binds dsDNA.

Belongs to the DnaA family. In terms of assembly, oligomerizes as a right-handed, spiral filament on DNA at oriC.

The protein resides in the cytoplasm. In terms of biological role, plays an essential role in the initiation and regulation of chromosomal replication. ATP-DnaA binds to the origin of replication (oriC) to initiate formation of the DNA replication initiation complex once per cell cycle. Binds the DnaA box (a 9 base pair repeat at the origin) and separates the double-stranded (ds)DNA. Forms a right-handed helical filament on oriC DNA; dsDNA binds to the exterior of the filament while single-stranded (ss)DNA is stabiized in the filament's interior. The ATP-DnaA-oriC complex binds and stabilizes one strand of the AT-rich DNA unwinding element (DUE), permitting loading of DNA polymerase. After initiation quickly degrades to an ADP-DnaA complex that is not apt for DNA replication. Binds acidic phospholipids. The chain is Chromosomal replication initiator protein DnaA 2 from Chlamydia pneumoniae (Chlamydophila pneumoniae).